Here is a 1469-residue protein sequence, read N- to C-terminus: ATP-binding cassette transporter abc4 (1469 aa).

Helical transmembrane passes span 21–40 (SLYY…FPTH), 55–74 (YSLE…RWIT), 94–114 (HGIL…FMFV), 121–141 (AFSD…LFLL), 160–180 (VLLN…PFFF), 189–209 (YSPF…IPLF), 296–316 (ILGM…SPIA), and 337–357 (WIVL…FYLF). The region spanning 296–580 (ILGMGVSSFM…IAYLMRQIVQ (285 aa)) is the ABC transmembrane type-1 1 domain. The N-linked (GlcNAc...) asparagine glycan is linked to N386. The next 2 membrane-spanning stretches (helical) occupy residues 412–432 (EFIH…YLLQ) and 441–461 (VGLA…PLVA). Residue N510 is glycosylated (N-linked (GlcNAc...) asparagine). 2 consecutive transmembrane segments (helical) span residues 524-544 (VLVE…FTTI) and 553-573 (IAFT…WIAY). The ABC transporter 1 domain maps to 611 to 840 (IGFFNASLTW…LAEQAASASE (230 aa)). N615 is a glycosylation site (N-linked (GlcNAc...) asparagine). 648–655 (GPTGSGKS) serves as a coordination point for ATP. N-linked (GlcNAc...) asparagine glycans are attached at residues N691, N790, and N815. The chain crosses the membrane as a helical span at residues 894-914 (GFYVAAVLLFFVTTQATSILI). The ABC transmembrane type-1 2 domain occupies 897–1176 (VAAVLLFFVT…FVRSCNSLQA (280 aa)). Residue N923 is glycosylated (N-linked (GlcNAc...) asparagine). A helical transmembrane segment spans residues 936 to 956 (FLFVYGTMLLAYSLLDFLRTV). N1007 carries an N-linked (GlcNAc...) asparagine glycan. 5 helical membrane-spanning segments follow: residues 1009 to 1029 (SGWL…ILSV), 1033 to 1053 (MPIF…FGLL), 1065 to 1085 (ISIY…GVSV), 1120 to 1140 (VAVR…LIAL), and 1148 to 1168 (GVVG…LLFV). The ABC transporter 2 domain maps to 1214-1453 (FNHVSVSYSA…NGHFRRMCDG (240 aa)). 1246–1253 (GRTGSGKS) lines the ATP pocket. N-linked (GlcNAc...) asparagine glycosylation occurs at N1355.

The protein belongs to the ABC transporter superfamily. ABCC family. Conjugate transporter (TC 3.A.1.208) subfamily.

The protein resides in the vacuole membrane. It catalyses the reaction ATP + H2O + xenobioticSide 1 = ADP + phosphate + xenobioticSide 2.. In terms of biological role, involved in detoxification of xenobiotics, and vacuolar sequestration of glutathione S-conjugates. Together with abc2, required for accumulation of a red pigment (ade pigment) in the vacuole of a mutant affected in the adenine biosynthetic pathway. This chain is ATP-binding cassette transporter abc4, found in Schizosaccharomyces pombe (strain 972 / ATCC 24843) (Fission yeast).